We begin with the raw amino-acid sequence, 216 residues long: Protein-L-isoaspartate O-methyltransferase (216 aa).

Ser66 is an active-site residue.

Belongs to the methyltransferase superfamily. L-isoaspartyl/D-aspartyl protein methyltransferase family.

It is found in the cytoplasm. The enzyme catalyses [protein]-L-isoaspartate + S-adenosyl-L-methionine = [protein]-L-isoaspartate alpha-methyl ester + S-adenosyl-L-homocysteine. In terms of biological role, catalyzes the methyl esterification of L-isoaspartyl residues in peptides and proteins that result from spontaneous decomposition of normal L-aspartyl and L-asparaginyl residues. It plays a role in the repair and/or degradation of damaged proteins. The polypeptide is Protein-L-isoaspartate O-methyltransferase (Colwellia psychrerythraea (strain 34H / ATCC BAA-681) (Vibrio psychroerythus)).